The chain runs to 226 residues: Ribonuclease 3 (226 aa).

Positions 7-129 (LPRLCRTLGY…IIGAIYLDSD (123 aa)) constitute an RNase III domain. Mg(2+) is bound at residue glutamate 42. Aspartate 46 is an active-site residue. Mg(2+)-binding residues include aspartate 115 and glutamate 118. Glutamate 118 is a catalytic residue. The region spanning 156-226 (DAKTLLQEYL…AAQVLELLKK (71 aa)) is the DRBM domain.

The protein belongs to the ribonuclease III family. As to quaternary structure, homodimer. The cofactor is Mg(2+).

Its subcellular location is the cytoplasm. The enzyme catalyses Endonucleolytic cleavage to 5'-phosphomonoester.. Its function is as follows. Digests double-stranded RNA. Involved in the processing of primary rRNA transcript to yield the immediate precursors to the large and small rRNAs (23S and 16S). Processes some mRNAs, and tRNAs when they are encoded in the rRNA operon. Processes pre-crRNA and tracrRNA of type II CRISPR loci if present in the organism. The protein is Ribonuclease 3 of Shewanella oneidensis (strain ATCC 700550 / JCM 31522 / CIP 106686 / LMG 19005 / NCIMB 14063 / MR-1).